Here is a 364-residue protein sequence, read N- to C-terminus: Spermidine/putrescine import ATP-binding protein PotA (364 aa).

An ABC transporter domain is found at 10–244; that stretch reads IEVVNVSKIF…PAERFVADFI (235 aa). Residue 46–53 participates in ATP binding; that stretch reads GPSGCGKT.

Belongs to the ABC transporter superfamily. Spermidine/putrescine importer (TC 3.A.1.11.1) family. In terms of assembly, the complex is composed of two ATP-binding proteins (PotA), two transmembrane proteins (PotB and PotC) and a solute-binding protein (PotD).

It is found in the cell inner membrane. The catalysed reaction is ATP + H2O + polyamine-[polyamine-binding protein]Side 1 = ADP + phosphate + polyamineSide 2 + [polyamine-binding protein]Side 1.. In terms of biological role, part of the ABC transporter complex PotABCD involved in spermidine/putrescine import. Responsible for energy coupling to the transport system. This is Spermidine/putrescine import ATP-binding protein PotA from Mesorhizobium japonicum (strain LMG 29417 / CECT 9101 / MAFF 303099) (Mesorhizobium loti (strain MAFF 303099)).